Reading from the N-terminus, the 229-residue chain is Uracil-DNA glycosylase (229 aa).

Asp-64 (proton acceptor) is an active-site residue.

This sequence belongs to the uracil-DNA glycosylase (UDG) superfamily. UNG family.

The protein localises to the cytoplasm. The catalysed reaction is Hydrolyzes single-stranded DNA or mismatched double-stranded DNA and polynucleotides, releasing free uracil.. Excises uracil residues from the DNA which can arise as a result of misincorporation of dUMP residues by DNA polymerase or due to deamination of cytosine. This is Uracil-DNA glycosylase from Klebsiella pneumoniae (strain 342).